Here is a 463-residue protein sequence, read N- to C-terminus: L-seryl-tRNA(Sec) selenium transferase (463 aa).

K295 carries the N6-(pyridoxal phosphate)lysine modification.

The protein belongs to the SelA family. Homodecamer; pentamer of dimers. Binds only one seryl-tRNA(Sec) per dimer. It depends on pyridoxal 5'-phosphate as a cofactor.

It localises to the cytoplasm. It carries out the reaction L-seryl-tRNA(Sec) + selenophosphate + H(+) = L-selenocysteinyl-tRNA(Sec) + phosphate. Its pathway is aminoacyl-tRNA biosynthesis; selenocysteinyl-tRNA(Sec) biosynthesis; selenocysteinyl-tRNA(Sec) from L-seryl-tRNA(Sec) (bacterial route): step 1/1. In terms of biological role, converts seryl-tRNA(Sec) to selenocysteinyl-tRNA(Sec) required for selenoprotein biosynthesis. This is L-seryl-tRNA(Sec) selenium transferase from Shigella flexneri serotype 5b (strain 8401).